The chain runs to 154 residues: Myoglobin (154 aa).

Residues 2-148 enclose the Globin domain; sequence GLSEGEWQLV…FRKDIAAKYK (147 aa). S4 bears the Phosphoserine mark. H65 provides a ligand contact to nitrite. H65 is a binding site for O2. Residue T68 is modified to Phosphothreonine. H94 is a heme b binding site.

In terms of assembly, monomer.

The protein localises to the cytoplasm. The protein resides in the sarcoplasm. The catalysed reaction is Fe(III)-heme b-[protein] + nitric oxide + H2O = Fe(II)-heme b-[protein] + nitrite + 2 H(+). It carries out the reaction H2O2 + AH2 = A + 2 H2O. Functionally, monomeric heme protein which primary function is to store oxygen and facilitate its diffusion within muscle tissues. Reversibly binds oxygen through a pentacoordinated heme iron and enables its timely and efficient release as needed during periods of heightened demand. Depending on the oxidative conditions of tissues and cells, and in addition to its ability to bind oxygen, it also has a nitrite reductase activity whereby it regulates the production of bioactive nitric oxide. Under stress conditions, like hypoxia and anoxia, it also protects cells against reactive oxygen species thanks to its pseudoperoxidase activity. The chain is Myoglobin (MB) from Delphinapterus leucas (Beluga whale).